Here is an 836-residue protein sequence, read N- to C-terminus: Spliceosome associated factor 3, U4/U6 recycling protein (836 aa).

HAT repeat units follow at residues 127–163 (EDFK…YEMS), 296–329 (KLPQ…FERD), 331–367 (RPNE…LLRR), 418–451 (KNMD…LERQ), and 453–486 (GDKE…FERE). The disordered stretch occupies residues 507-585 (RAIRPQKKVS…APGSFAVQKA (79 aa)). A compositionally biased stretch (basic and acidic residues) spans 540 to 550 (IVKKVKGDDGG). Over residues 558 to 579 (SNAKSSSAVSSSNASSTPAPGS) the composition is skewed to low complexity. RRM domains follow at residues 593–668 (RTIF…ANDP) and 683–760 (SKVF…LSNP). Disordered regions lie at residues 757 to 786 (LSNP…PRKG) and 811 to 830 (AMDV…DQFR). A compositionally biased stretch (polar residues) spans 816-827 (EGTSTSQPLSND).

Forms a complex composed of sart-3, terminal uridylyltransferase usip-1 and U6 snRNA; complex formation is mediated by usip-1 and sart-3 binding to U6 snRNA. Associates with U4 and U6 snRNP complexes, probably by interacting with U4 and U6 snRNAs. As to expression, ubiquitously expressed.

It is found in the nucleus. Its subcellular location is the nucleoplasm. Its function is as follows. U6 snRNP-binding protein that functions as a recycling factor of the splicing machinery. Promotes the initial reassembly of U4 and U6 snRNPs following their ejection from the spliceosome during its maturation. This Caenorhabditis elegans protein is Spliceosome associated factor 3, U4/U6 recycling protein.